A 210-amino-acid polypeptide reads, in one-letter code: Peptidyl-tRNA hydrolase (210 aa).

Tyr-14 serves as a coordination point for tRNA. Catalysis depends on His-19, which acts as the Proton acceptor. TRNA is bound by residues Phe-64, Asn-66, and Asn-112.

This sequence belongs to the PTH family. As to quaternary structure, monomer.

It localises to the cytoplasm. The enzyme catalyses an N-acyl-L-alpha-aminoacyl-tRNA + H2O = an N-acyl-L-amino acid + a tRNA + H(+). Hydrolyzes ribosome-free peptidyl-tRNAs (with 1 or more amino acids incorporated), which drop off the ribosome during protein synthesis, or as a result of ribosome stalling. Its function is as follows. Catalyzes the release of premature peptidyl moieties from peptidyl-tRNA molecules trapped in stalled 50S ribosomal subunits, and thus maintains levels of free tRNAs and 50S ribosomes. This chain is Peptidyl-tRNA hydrolase, found in Methylorubrum extorquens (strain CM4 / NCIMB 13688) (Methylobacterium extorquens).